Here is a 333-residue protein sequence, read N- to C-terminus: MRNACTRARLTRTARAMVKTLFIAIASVTFFFTSDLALPQSAAAYPFWAQQTYPETPREPTGRIVCANCHLAAKPTEVEVPQSVLPDTVFKAVVKIPYDTSVQQVGADGSKVGLNVGAVLMLPEGFKIAPEDRIPEELKEEIGDVYFQPYGEDKDNIVIVGPLPGEQYQEIVFPVLSPNPANDKNIHFGKYSVHVGGNRGRGQVYPTGEKSNNNLYSAAATGTISKIAKQEGEDGSVKYLVDIKTESGEVVSDTIPAGPELIVSEGQAVKAGDALTNNPNVGGFGQLDAEIVLQDANRVGWLIAFVALVMLAQVMLVLKKKQVEKVQAAEMNF.

An N-terminal signal peptide occupies residues 1–44; it reads MRNACTRARLTRTARAMVKTLFIAIASVTFFFTSDLALPQSAAA. Heme-binding residues include Tyr45, Cys66, Cys69, and His70. A helical membrane pass occupies residues 299–318; that stretch reads VGWLIAFVALVMLAQVMLVL.

The protein belongs to the cytochrome f family. As to quaternary structure, the 4 large subunits of the cytochrome b6-f complex are cytochrome b6, subunit IV (17 kDa polypeptide, PetD), cytochrome f and the Rieske protein, while the 4 small subunits are PetG, PetL, PetM and PetN. The complex functions as a dimer. Heme serves as cofactor.

Its subcellular location is the cellular thylakoid membrane. Component of the cytochrome b6-f complex, which mediates electron transfer between photosystem II (PSII) and photosystem I (PSI), cyclic electron flow around PSI, and state transitions. In Trichormus variabilis (strain ATCC 29413 / PCC 7937) (Anabaena variabilis), this protein is Cytochrome f.